The chain runs to 70 residues: Movement protein TGBp3 (70 aa).

The Lumenal segment spans residues 1–4; sequence MEAG. The chain crosses the membrane as a helical span at residues 5–27; it reads AYLNAIIFVLVATIIAVISRGLT. Residues 28 to 70 are Cytoplasmic-facing; the sequence is RTEPCTIRITGESITVHACHIDSETIKALANLKPLSLERLSFQ.

Belongs to the Tymovirales TGBp3 protein family.

The protein localises to the host endoplasmic reticulum membrane. Functionally, plays a role in viral cell-to-cell propagation, by facilitating genome transport to neighboring plant cells through plasmosdesmata. May induce the formation of granular vesicles derived from the Endoplasmic reticulum, which align on actin filaments. In Potato virus X (strain CP) (PVX), this protein is Movement protein TGBp3.